Consider the following 884-residue polypeptide: Cytosolic carboxypeptidase-like protein 5 (884 aa).

In terms of domain architecture, Peptidase M14 spans 157–570 (YPFSYSDCQD…AMAIAALDMA (414 aa)). Zn(2+) contacts are provided by histidine 252 and glutamate 255. Disordered stretches follow at residues 343 to 364 (HPQSPSEHQHSPCLPPDAPLSD) and 376 to 401 (HLGHTSDGDSPEDWTQTRPAEQKASG). Histidine 434 lines the Zn(2+) pocket. Glutamate 516 acts as the Proton donor/acceptor in catalysis. 2 disordered regions span residues 603–737 (LSST…HSTG) and 784–859 (QVRP…RICY). Over residues 620–635 (PPRSNSGLPVSCSENP) the composition is skewed to polar residues. 2 stretches are compositionally biased toward low complexity: residues 641–666 (SFSTGTSAGGSSSSQQNSPQMKNSPS) and 714–737 (PTSSSLAPSPNPTSSSPASSHSTG). At serine 839 the chain carries Phosphoserine. Residues 846–857 (ISCSLSDSQSRI) are compositionally biased toward polar residues.

This sequence belongs to the peptidase M14 family. Zn(2+) serves as cofactor.

The protein resides in the cytoplasm. It localises to the cytosol. It is found in the nucleus. The protein localises to the cytoskeleton. Its subcellular location is the spindle. The protein resides in the midbody. It carries out the reaction gamma-L-glutamyl-L-glutamyl-[protein] + H2O = L-glutamyl-[protein] + L-glutamate. It catalyses the reaction (L-glutamyl)(n+1)-gamma-L-glutamyl-L-glutamyl-[protein] + H2O = (L-glutamyl)(n)-gamma-L-glutamyl-L-glutamyl-[protein] + L-glutamate. The enzyme catalyses C-terminal L-alpha-aminoacyl-L-glutamyl-[tubulin] + H2O = C-terminal L-alpha-aminoacyl-[tubulin] + L-glutamate. The catalysed reaction is C-terminal L-alpha-aminoacyl-L-glutamyl-L-glutamyl-[tubulin] + H2O = C-terminal L-alpha-aminoacyl-L-glutamyl-[tubulin] + L-glutamate. Metallocarboxypeptidase that mediates deglutamylation of tubulin and non-tubulin target proteins. Catalyzes the removal of polyglutamate side chains present on the gamma-carboxyl group of glutamate residues within the C-terminal tail of alpha- and beta-tubulin. Cleaves alpha- and gamma-linked polyglutamate tubulin side-chain, as well as the branching point glutamate. Also catalyzes the removal of alpha-linked glutamate residues from the carboxy-terminus of alpha-tubulin. Mediates deglutamylation of nucleotidyltransferase CGAS, leading to CGAS antiviral defense response activation. In Ailuropoda melanoleuca (Giant panda), this protein is Cytosolic carboxypeptidase-like protein 5 (AGBL5).